The sequence spans 334 residues: Desumoylating isopeptidase 1 homolog (334 aa).

The PPPDE domain occupies 30 to 174; sequence TVVRLNVYDM…FLEKCIPQEW (145 aa). Residues histidine 55 and cysteine 133 contribute to the active site. Over residues 310-325 the composition is skewed to polar residues; that stretch reads SNIGKTNSTPGTTSNG. The disordered stretch occupies residues 310 to 334; it reads SNIGKTNSTPGTTSNGLAKPTCSEC.

This sequence belongs to the DeSI family. As to expression, expressed in the pharynx, hypodermis, intestine, head neuron and tail neuron.

It localises to the cytoplasm. The protein localises to the nucleus. Its function is as follows. Protease which deconjugates SUMO from some substrate proteins. Has isopeptidase but not SUMO-processing activity. Collaborates with ubql-1 in the export of ubiquitinated proteins from the nucleus to the cytoplasm. This Caenorhabditis elegans protein is Desumoylating isopeptidase 1 homolog.